The primary structure comprises 77 residues: Putative defensin-like protein 160 (77 aa).

An N-terminal signal peptide occupies residues 1–24 (MAKLSCSYFFILMLVFSALLMVEC). 4 cysteine pairs are disulfide-bonded: Cys30/Cys77, Cys40/Cys59, Cys45/Cys71, and Cys49/Cys73.

It belongs to the DEFL family.

Its subcellular location is the secreted. This chain is Putative defensin-like protein 160 (LCR26), found in Arabidopsis thaliana (Mouse-ear cress).